The sequence spans 797 residues: Homoaconitase, mitochondrial (797 aa).

A mitochondrion-targeting transit peptide spans 1 to 47; sequence MVARFVPSAMTVLVARRGLAMASTRRGWRGLAVNLKPAAGRQWRQAY. 3 residues coordinate [4Fe-4S] cluster: Cys-404, Cys-471, and Cys-474.

Belongs to the aconitase/IPM isomerase family. [4Fe-4S] cluster is required as a cofactor.

It localises to the mitochondrion. It carries out the reaction (2R,3S)-homoisocitrate = cis-homoaconitate + H2O. It participates in amino-acid biosynthesis; L-lysine biosynthesis via AAA pathway; L-alpha-aminoadipate from 2-oxoglutarate: step 3/5. Its function is as follows. Catalyzes the reversible hydration of cis-homoaconitate to (2R,3S)-homoisocitrate, a step in the alpha-aminoadipate pathway for lysine biosynthesis. This chain is Homoaconitase, mitochondrial (LYS4), found in Chaetomium globosum (strain ATCC 6205 / CBS 148.51 / DSM 1962 / NBRC 6347 / NRRL 1970) (Soil fungus).